The following is a 362-amino-acid chain: MAGETTKLDLSVKAIGWGAADASGVLQPIRFYRRAPGERDVKIRVLYCGVCNFDMEMVRNKWGFTRYPYVFGHETAGEVVEVGKKVEKFKVGDKVGVGCMVGSCGKCFHCQNEMENYCPEPNLADGSTYREEGERSYGGCSNVMVVDEKFVLRWPENLPQDKGVPLLCAGVVVYSPMKYMGFDKPGKHIGVFGLGGLGSIAVKFIKAFGGKATVISTSRRKEKEAIEEHGADAFVVNTDSEQLKALEGTMDGVVDTTPGGRTPMPLMLNLVKFDGAVILVGAPETLFELPLEPMGRKKIIGSSTGGLKEYQEVLDIAAKHNIVCDTEVIGIDYLSTAMERIKNLDVKYRFAIDIGNTLKFEE.

Residues cysteine 51, histidine 73, cysteine 104, cysteine 107, cysteine 110, cysteine 118, and cysteine 168 each coordinate Zn(2+). Histidine 73 is a binding site for substrate. NAD(+)-binding positions include glycine 193–glycine 198 and valine 280–alanine 282.

The protein belongs to the zinc-containing alcohol dehydrogenase family. Class-III subfamily. As to quaternary structure, homodimer. The cofactor is Zn(2+).

This is Alcohol dehydrogenase 13 from Catharanthus roseus (Madagascar periwinkle).